The following is a 187-amino-acid chain: Elongation factor P (187 aa).

The protein belongs to the elongation factor P family.

It is found in the cytoplasm. The protein operates within protein biosynthesis; polypeptide chain elongation. In terms of biological role, involved in peptide bond synthesis. Stimulates efficient translation and peptide-bond synthesis on native or reconstituted 70S ribosomes in vitro. Probably functions indirectly by altering the affinity of the ribosome for aminoacyl-tRNA, thus increasing their reactivity as acceptors for peptidyl transferase. The protein is Elongation factor P of Desulfatibacillum aliphaticivorans.